A 116-amino-acid chain; its full sequence is Large ribosomal subunit protein bL17 (116 aa).

This sequence belongs to the bacterial ribosomal protein bL17 family. Part of the 50S ribosomal subunit. Contacts protein L32.

The chain is Large ribosomal subunit protein bL17 from Helicobacter acinonychis (strain Sheeba).